Consider the following 106-residue polypeptide: Heat shock protein HspQ (106 aa).

The disordered stretch occupies residues 80-106 (DEHLDNDSMDELSQSIRNQLQAPRLRN). Positions 90 to 100 (ELSQSIRNQLQ) are enriched in polar residues.

This sequence belongs to the HspQ family.

Its subcellular location is the cytoplasm. In terms of biological role, involved in the degradation of certain denaturated proteins, including DnaA, during heat shock stress. The chain is Heat shock protein HspQ from Proteus mirabilis (strain HI4320).